Consider the following 122-residue polypeptide: Large ribosomal subunit protein uL14c (122 aa).

This sequence belongs to the universal ribosomal protein uL14 family. In terms of assembly, part of the 50S ribosomal subunit.

It is found in the plastid. The protein resides in the chloroplast. Binds to 23S rRNA. This Pleurastrum terricola (Filamentous green alga) protein is Large ribosomal subunit protein uL14c.